A 292-amino-acid chain; its full sequence is 4-hydroxy-tetrahydrodipicolinate synthase (292 aa).

Residue threonine 44 coordinates pyruvate. The Proton donor/acceptor role is filled by tyrosine 132. Lysine 160 acts as the Schiff-base intermediate with substrate in catalysis. Position 202 (isoleucine 202) interacts with pyruvate.

This sequence belongs to the DapA family. Homotetramer; dimer of dimers.

It is found in the cytoplasm. It catalyses the reaction L-aspartate 4-semialdehyde + pyruvate = (2S,4S)-4-hydroxy-2,3,4,5-tetrahydrodipicolinate + H2O + H(+). Its pathway is amino-acid biosynthesis; L-lysine biosynthesis via DAP pathway; (S)-tetrahydrodipicolinate from L-aspartate: step 3/4. Functionally, catalyzes the condensation of (S)-aspartate-beta-semialdehyde [(S)-ASA] and pyruvate to 4-hydroxy-tetrahydrodipicolinate (HTPA). This is 4-hydroxy-tetrahydrodipicolinate synthase from Magnetococcus marinus (strain ATCC BAA-1437 / JCM 17883 / MC-1).